A 275-amino-acid chain; its full sequence is MSMQSHHVHLVSDATGETVSNVVRACLAQFEDVRVVQHRWWLLRSPSQVGRVIEGIQRDPGTVVFTVVDPEIRRALEEACRLINIPCVALLDPVMDALALVLETKGNQQPGRQYTLDEGYFSRIEAMHFALALDDGQSLDRLKQAEVVVVGVSRTSKTPTCMFLANKGIRAANVPLVPGIDPPAELMDLAGPLVVGLTRDPKSLSDMRRSRLRLMREDGDSPYAEEDSVAREVREARRLYARMGWTVIDVTRKSIEEVAATIMQKLGTAPWGEGL.

151–158 (GVSRTSKT) serves as a coordination point for ADP.

It belongs to the pyruvate, phosphate/water dikinase regulatory protein family. PDRP subfamily.

The enzyme catalyses N(tele)-phospho-L-histidyl/L-threonyl-[pyruvate, phosphate dikinase] + ADP = N(tele)-phospho-L-histidyl/O-phospho-L-threonyl-[pyruvate, phosphate dikinase] + AMP + H(+). The catalysed reaction is N(tele)-phospho-L-histidyl/O-phospho-L-threonyl-[pyruvate, phosphate dikinase] + phosphate + H(+) = N(tele)-phospho-L-histidyl/L-threonyl-[pyruvate, phosphate dikinase] + diphosphate. Bifunctional serine/threonine kinase and phosphorylase involved in the regulation of the pyruvate, phosphate dikinase (PPDK) by catalyzing its phosphorylation/dephosphorylation. This is Putative pyruvate, phosphate dikinase regulatory protein from Rhodospirillum rubrum (strain ATCC 11170 / ATH 1.1.1 / DSM 467 / LMG 4362 / NCIMB 8255 / S1).